The following is a 232-amino-acid chain: Anti-sigma-K factor RskA (232 aa).

Over 1–91 (MTEPTDFQLL…QSRRQPRWRT (91 aa)) the chain is Cytoplasmic. Residues 92 to 112 (AVFASAAAIAVGLGAFGLGVL) traverse the membrane as a helical segment. The Extracellular segment spans residues 113–232 (TRPSASPTVA…GTVLAELPLR (120 aa)).

The protein belongs to the anti-sigma-K factor family.

It is found in the cell membrane. Its function is as follows. An anti-sigma factor for extracytoplasmic function (ECF) sigma factor SigK. ECF sigma factors are held in an inactive form by an anti-sigma factor until released by regulated intramembrane proteolysis (RIP). RIP occurs when an extracytoplasmic signal triggers a concerted proteolytic cascade to transmit information and elicit cellular responses. The membrane-spanning regulatory substrate protein is first cut extracytoplasmically (site-1 protease, S1P), then within the membrane itself (site-2 protease, S2P, Rip1), while cytoplasmic proteases finish degrading the regulatory protein, liberating the sigma factor. The protein is Anti-sigma-K factor RskA (rskA) of Mycobacterium ulcerans (strain Agy99).